The chain runs to 138 residues: MLKEIKNDYDKIREKMTQKIQELNQQITQIKKQIQIIEQNNLSDQQNQTIQKIKRQIYSIEFDILRVESNRSNMIYSKTFEDMCEYLDSHSGIGRIFAESFMREIEKNIQLMKQLVMMEDQIIKIKQEIRMIEKDLKI.

This is an uncharacterized protein from Methanocaldococcus jannaschii (strain ATCC 43067 / DSM 2661 / JAL-1 / JCM 10045 / NBRC 100440) (Methanococcus jannaschii).